A 176-amino-acid chain; its full sequence is Disulfide bond formation protein B (176 aa).

Residues 1–11 (MLQLTTYRNLQ) lie on the Cytoplasmic side of the membrane. Residues 12-28 (VFLVIMTAIGMSFALFF) traverse the membrane as a helical segment. Residues 29–46 (LQRYMGFSPCPLCIFQRI) lie on the Periplasmic side of the membrane. The cysteines at positions 38 and 41 are disulfide-linked. A helical transmembrane segment spans residues 47-63 (GLMIMGGFALIAALFHP). Residues 64–70 (KSMVIRL) are Cytoplasmic-facing. A helical transmembrane segment spans residues 71–88 (LLWLGSLAGIGWAAIVAG). The Periplasmic segment spans residues 89–145 (RHVWLQHLPADQVPSCGPGLDYWLDTLPMQQVLKEVFAGSGECASIEWTFLGLSIPE). A disulfide bridge connects residues Cys-104 and Cys-131. A helical transmembrane segment spans residues 146–164 (QSLILFSILILTHLLILWR). At 165–176 (IVRPSTPKPLAR) the chain is on the cytoplasmic side.

It belongs to the DsbB family.

It localises to the cell inner membrane. Functionally, required for disulfide bond formation in some periplasmic proteins. Acts by oxidizing the DsbA protein. In Psychrobacter arcticus (strain DSM 17307 / VKM B-2377 / 273-4), this protein is Disulfide bond formation protein B.